The primary structure comprises 450 residues: Phosphoglucosamine mutase (450 aa).

Catalysis depends on S107, which acts as the Phosphoserine intermediate. Residues S107, D246, D248, and D250 each coordinate Mg(2+). S107 is modified (phosphoserine).

This sequence belongs to the phosphohexose mutase family. Mg(2+) is required as a cofactor. Post-translationally, activated by phosphorylation.

It carries out the reaction alpha-D-glucosamine 1-phosphate = D-glucosamine 6-phosphate. Its function is as follows. Catalyzes the conversion of glucosamine-6-phosphate to glucosamine-1-phosphate. The polypeptide is Phosphoglucosamine mutase (Aromatoleum aromaticum (strain DSM 19018 / LMG 30748 / EbN1) (Azoarcus sp. (strain EbN1))).